Here is a 283-residue protein sequence, read N- to C-terminus: MIARILDGRTCAEKVKARVKENIRLLQEKGLPSPGLAVILVGNDPASATYVAHKERACQAVGIRSTVYRMPNTITESELASKIDECNRDSNTHGILLQLPLPAHIDPANLLERIRPDKDVDGFHPYNLGRLVQRRPALRPCTPYGVMTLLTETHENLEGKHAVIVGASNIVGRPMALELLLAKCTVTVCHRFTRDLAEHVKSAELLIVAIGKPGIIQSEWIKPGAIVIDVGFSRLSPNKIAGDIDFETAKERASWITPVPGGVGPMTVATLLENTLQAAQTFL.

An NADP(+)-binding site is contributed by 166–168; it reads GAS.

Belongs to the tetrahydrofolate dehydrogenase/cyclohydrolase family. Homodimer.

The enzyme catalyses (6R)-5,10-methylene-5,6,7,8-tetrahydrofolate + NADP(+) = (6R)-5,10-methenyltetrahydrofolate + NADPH. It catalyses the reaction (6R)-5,10-methenyltetrahydrofolate + H2O = (6R)-10-formyltetrahydrofolate + H(+). It functions in the pathway one-carbon metabolism; tetrahydrofolate interconversion. Functionally, catalyzes the oxidation of 5,10-methylenetetrahydrofolate to 5,10-methenyltetrahydrofolate and then the hydrolysis of 5,10-methenyltetrahydrofolate to 10-formyltetrahydrofolate. In Coxiella burnetii (strain Dugway 5J108-111), this protein is Bifunctional protein FolD.